The sequence spans 414 residues: Glucose-1-phosphate adenylyltransferase (414 aa).

Alpha-D-glucose 1-phosphate is bound by residues glycine 164, 184–185 (EK), and serine 204.

The protein belongs to the bacterial/plant glucose-1-phosphate adenylyltransferase family. Homotetramer.

The catalysed reaction is alpha-D-glucose 1-phosphate + ATP + H(+) = ADP-alpha-D-glucose + diphosphate. It participates in glycan biosynthesis; glycogen biosynthesis. In terms of biological role, involved in the biosynthesis of ADP-glucose, a building block required for the elongation reactions to produce glycogen. Catalyzes the reaction between ATP and alpha-D-glucose 1-phosphate (G1P) to produce pyrophosphate and ADP-Glc. The sequence is that of Glucose-1-phosphate adenylyltransferase from Acidothermus cellulolyticus (strain ATCC 43068 / DSM 8971 / 11B).